A 293-amino-acid polypeptide reads, in one-letter code: ATP synthase subunit a (293 aa).

8 helical membrane passes run 39–59, 73–93, 102–122, 128–148, 172–192, 198–218, 224–244, and 245–265; these read QVFGIFVVFIVLLTLFLVYWI, FVLLMQMLFVWAQDTTADLIG, YFLMLLLYLVSSNLIGLLGGI, SLTFTFSLGLATFLGIVIMGI, TLIPNPLSFLGEFAPLFSISL, ILGGTLILALFYNFWFFAFST, LALSLGAIFAGILTPALHVYF, and DVVVGTLQGYVFVMLTYNYWA.

The protein belongs to the ATPase A chain family. As to quaternary structure, F-type ATPases have 2 components, CF(1) - the catalytic core - and CF(0) - the membrane proton channel. CF(1) has five subunits: alpha(3), beta(3), gamma(1), delta(1), epsilon(1). CF(0) has three main subunits: a(1), b(2) and c(9-12). The alpha and beta chains form an alternating ring which encloses part of the gamma chain. CF(1) is attached to CF(0) by a central stalk formed by the gamma and epsilon chains, while a peripheral stalk is formed by the delta and b chains.

Its subcellular location is the cell membrane. Functionally, key component of the proton channel; it plays a direct role in the translocation of protons across the membrane. This is ATP synthase subunit a from Mycoplasma pneumoniae (strain ATCC 29342 / M129 / Subtype 1) (Mycoplasmoides pneumoniae).